The chain runs to 249 residues: 5'-nucleotidase SurE (249 aa).

Asp-9, Asp-10, Ser-40, and Asn-92 together coordinate a divalent metal cation.

The protein belongs to the SurE nucleotidase family. A divalent metal cation serves as cofactor.

It localises to the cytoplasm. It catalyses the reaction a ribonucleoside 5'-phosphate + H2O = a ribonucleoside + phosphate. Nucleotidase that shows phosphatase activity on nucleoside 5'-monophosphates. This chain is 5'-nucleotidase SurE, found in Shewanella sp. (strain ANA-3).